Consider the following 473-residue polypeptide: Alliin lyase 2 (473 aa).

An N-terminal signal peptide occupies residues 1–15 (MICLVILTCIIMSNS). A propeptide spanning residues 16–25 (FVNNNNMVQA) is cleaved from the precursor. Residues 38–84 (EAVANINCSEHGRAFLDGIISEGSPKCECNTCYTGPDCSEKIQGCSA) form the EGF-like; atypical domain. N44 is a glycosylation site (N-linked (GlcNAc...) asparagine). Cystine bridges form between C45-C64, C66-C75, and C69-C82. Chloride is bound at residue 117-125 (YFFNPVSNF). N-linked (GlcNAc...) asparagine glycosylation is found at N171 and N216. Position 276 is an N6-(pyridoxal phosphate)lysine (K276). N-linked (GlcNAc...) asparagine glycosylation occurs at N353. Cysteines 393 and 401 form a disulfide.

This sequence belongs to the alliinase family. Homodimer. The cofactor is pyridoxal 5'-phosphate. In terms of processing, glycosylated. High expression in bulbs, lower expression in leaves, and no expression in roots.

The protein localises to the vacuole. The enzyme catalyses an S-alkyl-L-cysteine S-oxide = an S-alkyl sulfenate + 2-aminoprop-2-enoate. It catalyses the reaction alliin = allylsulfenate + 2-aminoprop-2-enoate. Able to cleave the C-S bond of sulfoxide derivatives of Cys to produce allicin, thus giving rise to all sulfur compounds which are responsible for most of the properties of garlic, such as the specific smell and flavor as well as the health benefits like blood lipid or blood pressure lowering. The protein is Alliin lyase 2 of Allium sativum (Garlic).